The primary structure comprises 300 residues: Phosphatidylglycerol--prolipoprotein diacylglyceryl transferase (300 aa).

Helical transmembrane passes span L17–G37, M59–Y79, V94–L114, F129–G149, S204–A224, M230–F250, and L265–W285. Residue R142 coordinates a 1,2-diacyl-sn-glycero-3-phospho-(1'-sn-glycerol).

Belongs to the Lgt family.

It localises to the cell inner membrane. It carries out the reaction L-cysteinyl-[prolipoprotein] + a 1,2-diacyl-sn-glycero-3-phospho-(1'-sn-glycerol) = an S-1,2-diacyl-sn-glyceryl-L-cysteinyl-[prolipoprotein] + sn-glycerol 1-phosphate + H(+). It participates in protein modification; lipoprotein biosynthesis (diacylglyceryl transfer). Its function is as follows. Catalyzes the transfer of the diacylglyceryl group from phosphatidylglycerol to the sulfhydryl group of the N-terminal cysteine of a prolipoprotein, the first step in the formation of mature lipoproteins. The chain is Phosphatidylglycerol--prolipoprotein diacylglyceryl transferase from Ralstonia pickettii (strain 12J).